Reading from the N-terminus, the 461-residue chain is Vimentin (461 aa).

2 stretches are compositionally biased toward low complexity: residues 1–14 (MNRTTSRQTTSSSS) and 35–52 (SSRQYSSPVRSSRMSYSV). The tract at residues 1 to 52 (MNRTTSRQTTSSSSYKRMFGGEGRPSVGMARSTLSSRQYSSPVRSSRMSYSV) is disordered. Residues 1–91 (MNRTTSRQTT…FALSDAINSE (91 aa)) form a head region. The coil 1A stretch occupies residues 92 to 127 (FKANRTNEKAEMQHLNDRFASYIDKVRFLEQQNKIL). Residues 92–127 (FKANRTNEKAEMQHLNDRFASYIDKVRFLEQQNKIL) adopt a coiled-coil conformation. The 309-residue stretch at 99 to 407 (EKAEMQHLND…KLLEGEESRI (309 aa)) folds into the IF rod domain. Positions 128 to 149 (LAELEQLKGKGASRIGDLYEDE) are linker 1. Positions 150-241 (MRDLRRQVDQ…KLHDEEVAEL (92 aa)) form a coiled coil. Residues 150 to 241 (MRDLRRQVDQ…KLHDEEVAEL (92 aa)) are coil 1B. The segment at 242–264 (QAQIQDQHVQIDMDVAKPDLTAA) is linker 12. The tract at residues 265-403 (LRDVRVQYET…ATYRKLLEGE (139 aa)) is coil 2. Residues 299-403 (NRNTDAIRQA…ATYRKLLEGE (105 aa)) adopt a coiled-coil conformation. The tail stretch occupies residues 404 to 461 (ESRITTPMPNFSSFNLRESMLEARPMIDNLSKKVVIKTIETRDGHVINESTQNHDDLE).

Belongs to the intermediate filament family. Homomer assembled from elementary dimers. In terms of processing, one of the most prominent phosphoproteins in various cells of mesenchymal origin. Phosphorylation is enhanced during cell division, at which time vimentin filaments are significantly reorganized.

The protein resides in the cytoplasm. It is found in the cytoskeleton. The protein localises to the nucleus matrix. Vimentins are class-III intermediate filaments found in various non-epithelial cells, especially mesenchymal cells. Vimentin is attached to the nucleus, endoplasmic reticulum, and mitochondria, either laterally or terminally. The sequence is that of Vimentin (vim) from Oncorhynchus mykiss (Rainbow trout).